Reading from the N-terminus, the 296-residue chain is 2-methylisocitrate lyase (296 aa).

Residue 45-47 coordinates substrate; that stretch reads SGG. 2 residues coordinate Mg(2+): Asp85 and Asp87. Residues 123-124, Arg158, Glu188, 210-212, Arg241, and Arg270 each bind substrate; these read CG and NIT.

It belongs to the isocitrate lyase/PEP mutase superfamily. Methylisocitrate lyase family. As to quaternary structure, homotetramer; dimer of dimers. It depends on Mg(2+) as a cofactor.

The catalysed reaction is (2S,3R)-3-hydroxybutane-1,2,3-tricarboxylate = pyruvate + succinate. Its pathway is organic acid metabolism; propanoate degradation. Involved in the catabolism of short chain fatty acids (SCFA) via the 2-methylcitrate cycle I (propionate degradation route). Catalyzes the thermodynamically favored C-C bond cleavage of (2R,3S)-2-methylisocitrate to yield pyruvate and succinate via an alpha-carboxy-carbanion intermediate. In Escherichia coli (strain K12), this protein is 2-methylisocitrate lyase.